Reading from the N-terminus, the 302-residue chain is Phosphoribosylaminoimidazole-succinocarboxamide synthase (302 aa).

It belongs to the SAICAR synthetase family.

It carries out the reaction 5-amino-1-(5-phospho-D-ribosyl)imidazole-4-carboxylate + L-aspartate + ATP = (2S)-2-[5-amino-1-(5-phospho-beta-D-ribosyl)imidazole-4-carboxamido]succinate + ADP + phosphate + 2 H(+). Its pathway is purine metabolism; IMP biosynthesis via de novo pathway; 5-amino-1-(5-phospho-D-ribosyl)imidazole-4-carboxamide from 5-amino-1-(5-phospho-D-ribosyl)imidazole-4-carboxylate: step 1/2. In Ralstonia nicotianae (strain ATCC BAA-1114 / GMI1000) (Ralstonia solanacearum), this protein is Phosphoribosylaminoimidazole-succinocarboxamide synthase.